We begin with the raw amino-acid sequence, 2571 residues long: Highly reducing polyketide synthase 19 (2571 aa).

Positions 1 to 51 are disordered; that stretch reads MSPIFLGDSEDAATCRCGPPSSPSPELSGTETALTSDSDGPELLNPGPQGP. Positions 27-38 are enriched in polar residues; sequence LSGTETALTSDS. The Ketosynthase family 3 (KS3) domain maps to 51–485; that stretch reads PEPIAIIGMG…GANAHCILES (435 aa). Active-site for beta-ketoacyl synthase activity residues include Cys224, His359, and His398. Residues 609–932 are malonyl-CoA:ACP transacylase (MAT) domain; the sequence is VFTGQGAQWA…PYNSALLRGK (324 aa). Residue Ser701 is the For malonyltransferase activity of the active site. The segment at 1019-1163 is N-terminal hotdog fold; the sequence is HDLLGSRVPG…GLVKLTQNED (145 aa). The tract at residues 1019–1340 is dehydratase (DH) domain; it reads HDLLGSRVPG…SGCRMVPYSS (322 aa). Residues 1019-1344 form the PKS/mFAS DH domain; sequence HDLLGSRVPG…MVPYSSGTAV (326 aa). His1051 (proton acceptor; for dehydratase activity) is an active-site residue. The C-terminal hotdog fold stretch occupies residues 1177–1344; sequence MEQSAPRTWY…MVPYSSGTAV (168 aa). Asp1241 functions as the Proton donor; for dehydratase activity in the catalytic mechanism. The interval 1800 to 2140 is enoyl reductase (ER) domain; sequence NMSDAFVFTR…AFRALSGSTT (341 aa). The ketoreductase (KR) domain stretch occupies residues 2177–2355; the sequence is SYLLVGCLGG…ATSVGLGMIS (179 aa). Residues 2490-2568 enclose the Carrier domain; it reads AVAAQALELV…MLSELIAGKL (79 aa). O-(pantetheine 4'-phosphoryl)serine is present on Ser2527.

Its pathway is polyketide biosynthesis. In terms of biological role, highly reducing polyketide synthase; part of the gene cluster that mediates the biosynthesis of pyriculol and pyriculariol, two heptaketides that induce lesion formation upon application on rice leaves but are dispensable for pathogenicity. The highly reducing polyketide synthase synthesizes the heptaketide backbone of pyriculol and pyriculariol. Pyriculol and pyriculariol contain several hydroxyl moieties and double bonds, so it can be assumed that several reduction steps occur during biosynthesis. These reactions could be executed by PKS19 itself or partly by the tailoring enzymes OXR1, PXR2, RED1, RED2 or RED3, identified within the cluster. The FAD-linked oxidoreductase OXR1 is the only tailoring enzyme for which the function has been determined yet, and is involved in the oxidation of dihydropyriculol and dihydropyriculariol into pyriculol and pyriculariol, respectively. This chain is Highly reducing polyketide synthase 19, found in Pyricularia oryzae (strain 70-15 / ATCC MYA-4617 / FGSC 8958) (Rice blast fungus).